Consider the following 218-residue polypeptide: RNA polymerase sigma-H factor (218 aa).

Residues 62-75 carry the Polymerase core binding motif; sequence DIVQEGMIGLYKSI. The H-T-H motif DNA-binding region spans 182–201; that stretch reads YQEISDELNRHVKSIDNALQ.

It belongs to the sigma-70 factor family. Interacts transiently with the RNAP core.

Sigma factors are initiation factors that promote the attachment of RNA polymerase (RNAP) to specific initiation sites and are then released. This sigma factor is involved in the transition to post-exponential phase in the beginning of sporulation. It is also required for transcription of several stationary phase genes. Association with the RNAP core increases rapidly in early exponential phase, and reamins constant expression level after. The protein is RNA polymerase sigma-H factor (sigH) of Bacillus subtilis (strain 168).